A 183-amino-acid polypeptide reads, in one-letter code: Potassium-transporting ATPase KdpC subunit (183 aa).

Residues 11-31 (LALLMTLLTGVLYPLAVTGVA) form a helical membrane-spanning segment.

This sequence belongs to the KdpC family. The system is composed of three essential subunits: KdpA, KdpB and KdpC.

It is found in the cell inner membrane. In terms of biological role, part of the high-affinity ATP-driven potassium transport (or Kdp) system, which catalyzes the hydrolysis of ATP coupled with the electrogenic transport of potassium into the cytoplasm. This subunit acts as a catalytic chaperone that increases the ATP-binding affinity of the ATP-hydrolyzing subunit KdpB by the formation of a transient KdpB/KdpC/ATP ternary complex. In Pseudomonas putida (strain GB-1), this protein is Potassium-transporting ATPase KdpC subunit.